The following is a 624-amino-acid chain: Protein POLLEN DEFECTIVE IN GUIDANCE 1 (624 aa).

The interval 20–63 is disordered; it reads SFENDDTSIRRSSSDPITGNVASESPRDYGKRKRSKKKKKKVNQ. A compositionally biased stretch (polar residues) spans 33 to 42; sequence SDPITGNVAS. Basic residues predominate over residues 49–61; the sequence is GKRKRSKKKKKKV. Transmembrane regions (helical) follow at residues 263–283, 305–325, 391–411, 413–433, 545–565, and 578–598; these read VLID…LTVM, ASEL…ILLG, FVSD…ILLA, AITL…LLVS, LTFV…PVYA, and LWMV…KVLI.

This sequence belongs to the TAPT1 family. In terms of assembly, interacts with CRT3, but not with CRT1 or CNX. As to expression, expressed in inflorescences, siliques, roots and shoots. Expressed in early embryo, endosperm, mature pollen and pollen tubes, synergide cells and weakly in antipodal cells.

Its subcellular location is the membrane. The protein localises to the endoplasmic reticulum lumen. Its function is as follows. Probable component of the calreticulin 3 (CRT3) complex, acting probably as a co-chaperone involved in protein retention in the endoplasmic reticulum lumen. Required for micropylar pollen tube guidance. Plays an essential role in cell plate orientation or positioning in early embryo patterning. In Arabidopsis thaliana (Mouse-ear cress), this protein is Protein POLLEN DEFECTIVE IN GUIDANCE 1 (POD1).